The sequence spans 252 residues: Ribosomal RNA small subunit methyltransferase J (252 aa).

S-adenosyl-L-methionine is bound by residues 101–102 (RD), 117–118 (ER), 153–154 (SS), and Asp-171.

Belongs to the methyltransferase superfamily. RsmJ family.

Its subcellular location is the cytoplasm. The catalysed reaction is guanosine(1516) in 16S rRNA + S-adenosyl-L-methionine = N(2)-methylguanosine(1516) in 16S rRNA + S-adenosyl-L-homocysteine + H(+). Specifically methylates the guanosine in position 1516 of 16S rRNA. This is Ribosomal RNA small subunit methyltransferase J from Salmonella paratyphi B (strain ATCC BAA-1250 / SPB7).